The following is a 538-amino-acid chain: MSLVFDEYGNPFIVIRDQQAKERLRGIEAHRSHILAAKTISNIMKSSLGPKGMDKMMVSQDGEVLVTNDGATILENMQVDNQIAKLMVQLSKSQDDEIGDGTTGVVVLAGSLLEQAEQLIEKGIHPCRIYEGYETACKIATEHLKTISDSIEFSKDNIEPLIKTAMTCLGSKIVNRFHRQMSEIAVKAVISVADLERKDVNLENIKLEGKEGGKLEDTQLVKGIIIDKGISHPQMPKIIKDAKICLLTCPFEPPKPKTKNSIEITKAEDFKVLGEIEQKYFTDMVEKVKATGANLVICQWGFDDEANHLLLQNNLPAVRWVGGLDLEKIAMATGGRIVARFEDVSADKLGRAGLVREVGFGTTQDRYLSIEDCPNTNAVTIFVRGGNKMIVEEAKRSIHDALCVTRNLIRDNRVIYGGGSSEISCGLKISAMADDIASIEQYAVRAFADALDAIPLALAENSGLPSIESLSTVKAMQIKEKNPRLGIDCNHRDTNDMKAQHVFDTLPGKTQQFLLANQVVKMILKIDDIIKMGPGADE.

Belongs to the TCP-1 chaperonin family. As to quaternary structure, heterooligomeric complex of about 850 to 900 kDa that forms two stacked rings, 12 to 16 nm in diameter.

It localises to the cytoplasm. Its function is as follows. Molecular chaperone; assists the folding of proteins upon ATP hydrolysis. Known to play a role, in vitro, in the folding of actin and tubulin. This is T-complex protein 1 subunit epsilon (cct5) from Dictyostelium discoideum (Social amoeba).